The primary structure comprises 620 residues: Cilia- and flagella-associated protein 52 (620 aa).

WD repeat units follow at residues 62–106 (GHGN…LLAR), 109–150 (LHKG…AICG), 156–195 (LNVG…RKIW), 288–327 (QLQG…ETLI), 330–369 (CHFD…ELLR), 372–411 (VPNM…LMYV), 415–454 (AHRI…QKLE), 459–498 (EHKS…RNQM), 500–539 (LANT…VIRE), 543–582 (SLSG…VTHV), and 585–620 (GHSG…PYTS).

The protein belongs to the CFAP52 family. As to quaternary structure, microtubule inner protein component of sperm flagellar doublet microtubules. Interacts with BRCA2. Interacts with the CCT chaperonin complex. Interacts with HSP70. Interacts with AK8. Interacts with CFAP45. Interacts with DNAI1. Interacts with IQDC. Expressed in respiratory cells and sperm (at protein level). Highly expressed in testis. Up-regulated in hepatocellular carcinoma (HCC).

The protein resides in the cytoplasm. The protein localises to the cytoskeleton. Its subcellular location is the cilium axoneme. It localises to the flagellum axoneme. Functionally, microtubule inner protein (MIP) part of the dynein-decorated doublet microtubules (DMTs) in cilia axoneme. Important for proper ciliary and flagellar beating. May act in cooperation with CFAP45 and axonemal dynein subunit DNAH11. May play a role in cell growth and/or survival. The sequence is that of Cilia- and flagella-associated protein 52 from Homo sapiens (Human).